Consider the following 176-residue polypeptide: Inner membrane assembly complex subunit 17 (176 aa).

The N-terminal 28 residues, 1–28 (MLRVLPTSFKSISTRSAFRACQLSPLTV), are a transit peptide targeting the mitochondrion. Residues 29–98 (YCPLKSSQGT…MSQEVSLKRF (70 aa)) lie on the Mitochondrial matrix side of the membrane. A helical membrane pass occupies residues 99–121 (VRPLWVFFLMSSTVYLILHYVWW). At 122–176 (KLEVVEKEKELQSHVESLEMELDQTLKSQNQNVSSSQNNGNNKTNDKPWYRKWFF) the chain is on the mitochondrial intermembrane side. A coiled-coil region spans residues 123–151 (LEVVEKEKELQSHVESLEMELDQTLKSQN). Residues 149–163 (SQNQNVSSSQNNGNN) are compositionally biased toward low complexity. The segment at 149–168 (SQNQNVSSSQNNGNNKTNDK) is disordered.

The protein belongs to the INA17 family. As to quaternary structure, component of the inner membrane assembly (INA) complex, composed of INA17 and INA22. Interacts with a subset of F(1)F(0)-ATP synthase subunits of the F(1)-domain and the peripheral stalk.

The protein localises to the mitochondrion inner membrane. Component of the INA complex (INAC) that promotes the biogenesis of mitochondrial F(1)F(0)-ATP synthase. INAC facilitates the assembly of the peripheral stalk and promotes the assembly of the catalytic F(1)-domain with the membrane-embedded F(0)-domain. This chain is Inner membrane assembly complex subunit 17, found in Zygosaccharomyces rouxii (strain ATCC 2623 / CBS 732 / NBRC 1130 / NCYC 568 / NRRL Y-229).